The chain runs to 107 residues: uncharacterized protein (107 aa).

The protein belongs to the HesB/IscA family.

This is an uncharacterized protein from Azotobacter vinelandii.